The primary structure comprises 269 residues: uncharacterized protein (269 aa).

Helical transmembrane passes span 9-29, 50-70, 82-102, 107-127, 147-167, 173-193, 200-220, and 224-244; these read YIIGLVLALGVSFATLLAHLF, FMLGGYLLVEYLSFLLMIVPL, FSIIHTSIWYNVFVVFTVWAF, LYWTAFFSLCLFSSSFTMYGQ, LVFGKSLWFVVYAFSAALHCT, VFSNVFIWFFAAMYLVPILGF, LVSAYLFLSIGIGQMFIHLFA, and IFAFIIAGLMTLFAALLFLLP.

The protein localises to the membrane. This is an uncharacterized protein from Schizosaccharomyces pombe (strain 972 / ATCC 24843) (Fission yeast).